A 247-amino-acid polypeptide reads, in one-letter code: 1-(5-phosphoribosyl)-5-[(5-phosphoribosylamino)methylideneamino] imidazole-4-carboxamide isomerase 1 (247 aa).

Glu-8 functions as the Proton acceptor in the catalytic mechanism. Asp-128 functions as the Proton donor in the catalytic mechanism.

Belongs to the HisA/HisF family.

Its subcellular location is the cytoplasm. It catalyses the reaction 1-(5-phospho-beta-D-ribosyl)-5-[(5-phospho-beta-D-ribosylamino)methylideneamino]imidazole-4-carboxamide = 5-[(5-phospho-1-deoxy-D-ribulos-1-ylimino)methylamino]-1-(5-phospho-beta-D-ribosyl)imidazole-4-carboxamide. It functions in the pathway amino-acid biosynthesis; L-histidine biosynthesis; L-histidine from 5-phospho-alpha-D-ribose 1-diphosphate: step 4/9. In Ruegeria sp. (strain TM1040) (Silicibacter sp.), this protein is 1-(5-phosphoribosyl)-5-[(5-phosphoribosylamino)methylideneamino] imidazole-4-carboxamide isomerase 1.